The chain runs to 136 residues: uncharacterized protein (136 aa).

The protein belongs to the MG439/MG440 family.

This is an uncharacterized protein from Mycoplasma pneumoniae (strain ATCC 29342 / M129 / Subtype 1) (Mycoplasmoides pneumoniae).